A 309-amino-acid chain; its full sequence is Carbamate kinase 3 (309 aa).

This sequence belongs to the carbamate kinase family.

It is found in the cytoplasm. The enzyme catalyses hydrogencarbonate + NH4(+) + ATP = carbamoyl phosphate + ADP + H2O + H(+). Its pathway is metabolic intermediate metabolism; carbamoyl phosphate degradation; CO(2) and NH(3) from carbamoyl phosphate: step 1/1. The sequence is that of Carbamate kinase 3 (arcC3) from Staphylococcus aureus (strain USA300).